A 228-amino-acid polypeptide reads, in one-letter code: UPF0758 protein SH1266 (228 aa).

Residues Lys-102 to Phe-224 enclose the MPN domain. His-173, His-175, and Asp-186 together coordinate Zn(2+). The short motif at His-173–Asp-186 is the JAMM motif element.

It belongs to the UPF0758 family.

The sequence is that of UPF0758 protein SH1266 from Staphylococcus haemolyticus (strain JCSC1435).